The sequence spans 341 residues: Guanine nucleotide-binding protein subunit beta (341 aa).

WD repeat units follow at residues 54–93 (GHLA…KVHA), 96–135 (LRSS…GNVR), 142–180 (GHTG…QTTA), 183–222 (GHTG…CKQT), 225–264 (GHES…EIGM), 269–308 (NIIC…RAGV), and 311–341 (GHDN…RIWN).

This sequence belongs to the WD repeat G protein beta family. In terms of assembly, g proteins are composed of 3 units, alpha, beta and gamma. The G protein beta1-gamma2 dimer interacts with calmodulin. As to expression, abundantly expressed in gills, gonad and mantle and at lower levels in digestion gland. Not detected in muscle.

Its subcellular location is the cytoplasm. Guanine nucleotide-binding proteins (G proteins) are involved as a modulator or transducer in various transmembrane signaling systems. The beta and gamma chains are required for the GTPase activity, for replacement of GDP by GTP, and for G protein-effector interaction. This Pinctada fucata (Akoya pearl oyster) protein is Guanine nucleotide-binding protein subunit beta.